We begin with the raw amino-acid sequence, 362 residues long: MNSRVFNFGAGPAMLPEEILKEAQEEFLNWRNTGMSILEIGHRTPEIINLLSTAEQSLRELLNIPKNYHVLFLGGAARAQFAMIPMNLLQPGDEAAYFITGIWSKMAYHEANLLKQAYYLSNEEKEGFVSIPDYQKWELKSNTAYVYYTPNETINGVRFPYVPKTGGVPLVADMTSCLLSEPININQYGLIFAGAQKNIANAGLTVVIIHEDLLKNQPEPVIPTMLNYKNHAEHRSLYATPPVFNCYLASKMFEWIKTQGGIEGLFQRNCLKAAKLYQYLDSTDFYLTPVSKEARSIMNICFSLCYPDLEQKFLYMANERGLKALKGHRFAGGLRASLYNAMPMAGVDALIEFLSEFAKENG.

R43 is a binding site for L-glutamate. Pyridoxal 5'-phosphate-binding positions include 77 to 78 (AR), W103, T153, D173, and Q196. K197 is subject to N6-(pyridoxal phosphate)lysine.

Belongs to the class-V pyridoxal-phosphate-dependent aminotransferase family. SerC subfamily. In terms of assembly, homodimer. Pyridoxal 5'-phosphate is required as a cofactor.

It is found in the cytoplasm. It carries out the reaction O-phospho-L-serine + 2-oxoglutarate = 3-phosphooxypyruvate + L-glutamate. The catalysed reaction is 4-(phosphooxy)-L-threonine + 2-oxoglutarate = (R)-3-hydroxy-2-oxo-4-phosphooxybutanoate + L-glutamate. The protein operates within amino-acid biosynthesis; L-serine biosynthesis; L-serine from 3-phospho-D-glycerate: step 2/3. Its pathway is cofactor biosynthesis; pyridoxine 5'-phosphate biosynthesis; pyridoxine 5'-phosphate from D-erythrose 4-phosphate: step 3/5. In terms of biological role, catalyzes the reversible conversion of 3-phosphohydroxypyruvate to phosphoserine and of 3-hydroxy-2-oxo-4-phosphonooxybutanoate to phosphohydroxythreonine. The polypeptide is Phosphoserine aminotransferase (Legionella pneumophila (strain Corby)).